The primary structure comprises 260 residues: Thrombin-like enzyme gloshedobin (260 aa).

Residues 1-18 (MVLIRVQANLLILQLSYA) form the signal peptide. Residues 19 to 24 (QKSSEL) constitute a propeptide that is removed on maturation. The 228-residue stretch at 25–252 (IIGGDECNIN…TEWIQSIIAG (228 aa)) folds into the Peptidase S1 domain. 6 disulfide bridges follow: Cys31–Cys165, Cys52–Cys68, Cys100–Cys258, Cys144–Cys212, Cys176–Cys191, and Cys202–Cys227. Residues His67 and Asp112 each act as charge relay system in the active site. Residues Asn123 and Asn124 are each glycosylated (N-linked (GlcNAc...) asparagine). The active-site Charge relay system is the Ser206.

The protein belongs to the peptidase S1 family. Snake venom subfamily. Monomer. As to expression, expressed by the venom gland.

It localises to the secreted. With respect to regulation, completely inhibited by PMSF, and N-tosyl-Lphenylalanine chloromethyl ketone (TPCK) and poorly inhibited by benzamidine and derivates. Not inhibited by EDTA, heparin and hirudin. Thrombin-like snake venom serine protease. The recombinant form clots fibrinogen by cleaving fibrinogen Aalpha chain (FGA), and slowly Bbeta chain (FGB). Has amidolytic activities. This is Thrombin-like enzyme gloshedobin from Gloydius shedaoensis (Shedao island pit viper).